We begin with the raw amino-acid sequence, 874 residues long: Ectonucleotide pyrophosphatase/phosphodiesterase family member 3 (874 aa).

At 1-11 (MQSTLNLSTEE) the chain is on the cytoplasmic side. The chain crosses the membrane as a helical; Signal-anchor for type II membrane protein span at residues 12-30 (PVKRNTVKKYKIICIVLLI). The Extracellular segment spans residues 31-874 (LLVAVSLALG…TYLPVFETVI (844 aa)). SMB domains lie at 50 to 93 (EQGS…VQST) and 94 to 138 (QIWT…GETS). 10 cysteine pairs are disulfide-bonded: C54/C71, C58/C89, C69/C82, C75/C81, C98/C115, C103/C133, C113/C126, C119/C125, C144/C190, and C152/C364. A Cell attachment site motif is present at residues 78–80 (RGD). The phosphodiesterase stretch occupies residues 160–544 (PVILFSMDGF…HGSLNHLLKV (385 aa)). Residue D167 participates in Zn(2+) binding. K204 serves as a coordination point for ATP. T205 contributes to the Zn(2+) binding site. The active-site Nucleophile is the T205. N226 lines the ATP pocket. N-linked (GlcNAc...) asparagine glycosylation occurs at N236. Residue D275 participates in ATP binding. N-linked (GlcNAc...) asparagine glycosylation occurs at N279. Y289 serves as a coordination point for ATP. An N-linked (GlcNAc...) asparagine glycan is attached at N290. Zn(2+) contacts are provided by D325, H329, D372, and H373. Intrachain disulfides connect C380/C477, C428/C817, C561/C622, C574/C678, C576/C663, and C786/C796. The N-linked (GlcNAc...) asparagine glycan is linked to N425. Zn(2+) is bound at residue H482. An N-linked (GlcNAc...) asparagine glycan is attached at N532. The segment at 581 to 874 (TNSDLERVNQ…TYLPVFETVI (294 aa)) is nuclease. N677, N686, and N698 each carry an N-linked (GlcNAc...) asparagine glycan. D751, D755, H757, and D759 together coordinate Ca(2+). N770, N788, and N820 each carry an N-linked (GlcNAc...) asparagine glycan.

This sequence belongs to the nucleotide pyrophosphatase/phosphodiesterase family. As to quaternary structure, monomer and homodimer. Zn(2+) is required as a cofactor. Post-translationally, N-glycosylated. N-glycosylation is necessary for normal transport to the cell membrane, but is not the apical targeting signal.

The protein localises to the cell membrane. It is found in the apical cell membrane. It localises to the secreted. It carries out the reaction a ribonucleoside 5'-triphosphate + H2O = a ribonucleoside 5'-phosphate + diphosphate + H(+). The catalysed reaction is ATP + H2O = AMP + diphosphate + H(+). It catalyses the reaction CTP + H2O = CMP + diphosphate + H(+). The enzyme catalyses GTP + H2O = GMP + diphosphate + H(+). It carries out the reaction UTP + H2O = UMP + diphosphate + H(+). The catalysed reaction is UDP-N-acetyl-alpha-D-glucosamine + H2O = N-acetyl-alpha-D-glucosamine 1-phosphate + UMP + 2 H(+). It catalyses the reaction P(1),P(3)-bis(5'-adenosyl) triphosphate + H2O = AMP + ADP + 2 H(+). The enzyme catalyses P(1),P(4)-bis(5'-adenosyl) tetraphosphate + H2O = AMP + ATP + 2 H(+). It carries out the reaction P(1),P(5)-bis(5'-adenosyl) pentaphosphate + H2O = adenosine 5'-tetraphosphate + AMP + 2 H(+). The catalysed reaction is P(1),P(4)-bis(5'-guanosyl) tetraphosphate + H2O = GMP + GTP + 2 H(+). It catalyses the reaction Hydrolytically removes 5'-nucleotides successively from the 3'-hydroxy termini of 3'-hydroxy-terminated oligonucleotides.. Hydrolase that metabolizes extracellular nucleotides, including ATP, GTP, UTP and CTP. Limits mast cells and basophils response during inflammation and during the chronic phases of allergic responses by eliminating extracellular ATP, a signaling molecule activating these cells in an autocrine manner. Metabolizes extracellular ATP in the lumen of the small intestine, and thereby prevents ATP-induced apoptosis of intestinal plasmacytoid dendritic cells. Has a broad specificity and can also hydrolyze UDP-GlcNAc into UMP and GlcNAc-1-phosphate and potentially several other intracellular nucleotide sugars, including UDP-GalNAc, CMP-NeuAc, GDP-Fuc, and UDP-GlcA. Thereby, could modulate glycan biosynthesis and protein glycosylation. Can hydrolyze extracellular dinucleoside polyphosphates, including the vasoactive adenosine polyphosphates as well. In addition, displays an alkaline phosphodiesterase activity in vitro. The polypeptide is Ectonucleotide pyrophosphatase/phosphodiesterase family member 3 (ENPP3) (Bos taurus (Bovine)).